Here is a 263-residue protein sequence, read N- to C-terminus: Acyl-[acyl-carrier-protein]--UDP-N-acetylglucosamine O-acyltransferase (263 aa).

It belongs to the transferase hexapeptide repeat family. LpxA subfamily. Homotrimer.

Its subcellular location is the cytoplasm. The catalysed reaction is a (3R)-hydroxyacyl-[ACP] + UDP-N-acetyl-alpha-D-glucosamine = a UDP-3-O-[(3R)-3-hydroxyacyl]-N-acetyl-alpha-D-glucosamine + holo-[ACP]. Its pathway is glycolipid biosynthesis; lipid IV(A) biosynthesis; lipid IV(A) from (3R)-3-hydroxytetradecanoyl-[acyl-carrier-protein] and UDP-N-acetyl-alpha-D-glucosamine: step 1/6. Functionally, involved in the biosynthesis of lipid A, a phosphorylated glycolipid that anchors the lipopolysaccharide to the outer membrane of the cell. This is Acyl-[acyl-carrier-protein]--UDP-N-acetylglucosamine O-acyltransferase from Aeromonas salmonicida (strain A449).